Reading from the N-terminus, the 416-residue chain is Deferrochelatase (416 aa).

The segment at residues 1 to 28 (MSDEQKKPEQIHRRDILKWGAMAGAAVA) is a signal peptide (tat-type signal). 241–243 (GTG) is a binding site for heme b. Residues 293–318 (QEDTFGRRKSSGAPFGQKKETDPVKL) form a disordered region. His-326 and Arg-339 together coordinate heme b.

Belongs to the DyP-type peroxidase family. As to quaternary structure, component of the iron transporter efeUOB/M complex composed of EfeU, EfeM and EfeB; EfeU is essential for the complex formation. The cofactor is heme b. Exported by the Tat system. The position of the signal peptide cleavage has not been experimentally proven.

It localises to the secreted. It is found in the cell membrane. It carries out the reaction heme b + 2 H(+) = protoporphyrin IX + Fe(2+). The enzyme catalyses 2 Fe(2+) + H2O2 + 2 H(+) = 2 Fe(3+) + 2 H2O. Involved in the recovery of exogenous heme iron. Extracts iron from heme while preserving the protoporphyrin ring intact. Part of the iron transporter system efeUOB/M involved in iron import. Catalyzes the peroxide-mediated oxidation of Fe(2+) into Fe(3+); EfeM binds Fe(3+) and delivers it to the cell membrane permease EfeU. This chain is Deferrochelatase, found in Bacillus subtilis (strain 168).